The primary structure comprises 198 residues: Ribonuclease HII (198 aa).

One can recognise an RNase H type-2 domain in the interval 11–198 (ELIAGVDEVG…SPVRKLLENE (188 aa)). Residues Asp17, Glu18, and Asp109 each coordinate a divalent metal cation.

Belongs to the RNase HII family. The cofactor is Mn(2+). It depends on Mg(2+) as a cofactor.

It is found in the cytoplasm. The catalysed reaction is Endonucleolytic cleavage to 5'-phosphomonoester.. Endonuclease that specifically degrades the RNA of RNA-DNA hybrids. The polypeptide is Ribonuclease HII (Mannheimia succiniciproducens (strain KCTC 0769BP / MBEL55E)).